Consider the following 115-residue polypeptide: Large ribosomal subunit protein bL20 (115 aa).

The protein belongs to the bacterial ribosomal protein bL20 family.

Its function is as follows. Binds directly to 23S ribosomal RNA and is necessary for the in vitro assembly process of the 50S ribosomal subunit. It is not involved in the protein synthesizing functions of that subunit. This chain is Large ribosomal subunit protein bL20, found in Prochlorococcus marinus (strain MIT 9301).